Reading from the N-terminus, the 1342-residue chain is MVYSYTEKKRIRKDFGKRPQVLDVPYLLSIQLDSFQKFIEQDPEGQYGLEAAFRSVFPIQSYSGNSELQYVSYRLGEPVFDVQECQIRGVTYSAPLRVKLRLVIYEREAPEGTVKDIKEQEVYMGEIPLMTDNGTFVINGTERVIVSQLHRSPGVFFDSDKGKTHSSGKVLYNARIIPYRGSWLDFEFDPKDNLFVRIDRRRKLPATIILRALNYTTEQILDLFFEKVIFEIRDNKLQMELVPERLRGETASFDIEANGKVYVEKGRRITARHIRQLEKDDVKLIEVPVEYIAGKVVAKDYIDESTGELICAANMELSLDLLAKLSQSGHKRIETLFTNDLDHGPYISETLRVDPTNDRLSALVEIYRMMRPGEPPTREAAESLFENLFFSEDRYDLSAVGRMKFNRSLLREEIEGSGILSKDDIIDVMKKLIDIRNGKGEVDDIDHLGNRRIRSVGEMAENQFRVGLVRVERAVKERLSLGDLDTLMPQDMINAKPISAAVKEFFGSSQLSQFMDQNNPLSEITHKRRISALGPGGLTRERAGFEVRDVHPTHYGRVCPIETPEGPNIGLINSLSVYAQTNEYGFLETPYRKVTDGVVTDEIHYLSAIEEGNYVIAQANSNLDEEGHFVEDLVTCRSKGESSLFSRDQVDYMDVSTQQVVSVGASLIPFLEHDDANRALMGANMQRQAVPTLRADKPLVGTGMERAVAVDSGVTAVAKRGGVVQYVDASRIVIKVNEDEMYPGEAGIDIYNLTKYTRSNQNTCINQMPCVSLGEPVERGDVLADGPSTDLGELALGQNMRVAFMPWNGYNFEDSILVSERVVQEDRFTTIHIQELACVSRDTKLGPEEITADIPNVGEAALSKLDESGIVYIGAEVTGGDILVGKVTPKGETQLTPEEKLLRAIFGEKASDVKDSSLRVPNGVSGTVIDVQVFTRDGVEKDKRALEIEEMQLKQAKKDLSEELQILEAGLFSRIRAVLVAGGVEAEKLDKLPRDRWLELGLTDEEKQNQLEQLAEQYDELKHEFEKKLEAKRRKITQGDDLAPGVLKIVKGYLAVKRRIQPGDKMAGRHGNKGVISKINPIEDMPYDENGTPVDIVLNPLGVPSRMNIGQILETHLGMAAKGIGDKINAMLKQQQEVAKLREFIQRAYDLGADVRQKVDLSTFSDEEVMRLAENLRKGMPIATPVFDGAKEAEIKELLKLGDLPTSGQIRLYDGRTGEQFERPVTVGYMYMLKLNHLVDDKMHARSTGSYSLVTQQPLGGKAQFGGQRFGEMEVWALEAYGAAYTLQEMLTVKSDDVNGRTKMYKNIVDGNHQMEPGMPESFNVLLKEIRSLGINIELEDE.

N6-acetyllysine is present on residues K1022 and K1200.

Belongs to the RNA polymerase beta chain family. In terms of assembly, the RNAP catalytic core consists of 2 alpha, 1 beta, 1 beta' and 1 omega subunit. When a sigma factor is associated with the core the holoenzyme is formed, which can initiate transcription.

It catalyses the reaction RNA(n) + a ribonucleoside 5'-triphosphate = RNA(n+1) + diphosphate. DNA-dependent RNA polymerase catalyzes the transcription of DNA into RNA using the four ribonucleoside triphosphates as substrates. This is DNA-directed RNA polymerase subunit beta from Shigella flexneri serotype 5b (strain 8401).